The primary structure comprises 418 residues: Serine hydroxymethyltransferase (418 aa).

Residues L121 and 125–127 each bind (6S)-5,6,7,8-tetrahydrofolate; that span reads GHL. K230 bears the N6-(pyridoxal phosphate)lysine mark. Residues E246 and 355 to 357 each bind (6S)-5,6,7,8-tetrahydrofolate; that span reads SPF.

Belongs to the SHMT family. As to quaternary structure, homodimer. Pyridoxal 5'-phosphate serves as cofactor.

It is found in the cytoplasm. It catalyses the reaction (6R)-5,10-methylene-5,6,7,8-tetrahydrofolate + glycine + H2O = (6S)-5,6,7,8-tetrahydrofolate + L-serine. It participates in one-carbon metabolism; tetrahydrofolate interconversion. It functions in the pathway amino-acid biosynthesis; glycine biosynthesis; glycine from L-serine: step 1/1. Functionally, catalyzes the reversible interconversion of serine and glycine with tetrahydrofolate (THF) serving as the one-carbon carrier. This reaction serves as the major source of one-carbon groups required for the biosynthesis of purines, thymidylate, methionine, and other important biomolecules. Also exhibits THF-independent aldolase activity toward beta-hydroxyamino acids, producing glycine and aldehydes, via a retro-aldol mechanism. The protein is Serine hydroxymethyltransferase of Streptococcus pneumoniae (strain Taiwan19F-14).